We begin with the raw amino-acid sequence, 165 residues long: METQRASFSLGRSSLWLLLLGLVVPSASAQDLSYREAVLRAVDQFNERSSEANLYRLLELDPPPEQDVEHPGARKPVSFTVKETVCPRTTPQPPEQCDFKENGLVKQCVGTVTRYWIRGDFDITCNNIQSAGLFRRLRDSIRRGQQKILEKARRIGERIKDIFRG.

A signal peptide spans 1–29; the sequence is METQRASFSLGRSSLWLLLLGLVVPSASA. A propeptide spanning residues 30–130 is cleaved from the precursor; sequence QDLSYREAVL…FDITCNNIQS (101 aa). Cystine bridges form between C86-C97 and C108-C125. Position 164 is an arginine amide (R164).

This sequence belongs to the cathelicidin family. In terms of tissue distribution, expressed in bone marrow myeloid cells, spleen and testis.

The protein resides in the secreted. Its function is as follows. Exerts a potent antimicrobial activity. This is Cathelicidin-7 (CATHL7) from Bos taurus (Bovine).